A 489-amino-acid chain; its full sequence is Fumarate reductase (CoM/CoB) subunit B (489 aa).

Positions 2-89 (INVKVLRFEP…GAVIEPVDLP (88 aa)) constitute a 2Fe-2S ferredoxin-type domain. The [2Fe-2S] cluster site is built by cysteine 53, cysteine 58, cysteine 61, and cysteine 73. 4Fe-4S ferredoxin-type domains are found at residues 124-158 (PEDY…YAGP) and 178-209 (AAGG…PGDA). 8 residues coordinate [4Fe-4S] cluster: cysteine 136, cysteine 139, cysteine 142, cysteine 146, cysteine 189, cysteine 192, cysteine 195, and cysteine 199.

As to quaternary structure, subunit B of the heterodimeric fumarate reductase of methanogenic Archaea, composed of subunits A (TfrA) and B (TfrB). Requires [2Fe-2S] cluster as cofactor. The cofactor is [4Fe-4S] cluster.

It is found in the cytoplasm. The enzyme catalyses coenzyme B + coenzyme M + fumarate = coenzyme M-coenzyme B heterodisulfide + succinate. In terms of biological role, catalyzes the reduction of fumarate with reduced coenzyme M (CoM-S-H) and coenzyme B (CoB-S-H). In vitro, is able to reduces fumarate with reduced benzyl viologen, oxidize CoM-S-H and CoB-S-H to CoM-S-S-CoB with methylene blue, and reduce CoM-S-S-CoB with reduced benzyl viologen. The enzyme has specificity for the two thiol compounds as the CoB--CoM heterodisulfide reductase. The enzyme is very sensitive to oxygen. The protein is Fumarate reductase (CoM/CoB) subunit B of Methanothermobacter marburgensis (strain ATCC BAA-927 / DSM 2133 / JCM 14651 / NBRC 100331 / OCM 82 / Marburg) (Methanobacterium thermoautotrophicum).